The sequence spans 806 residues: Acetyl-CoA decarbonylase/synthase complex subunit alpha 1 (806 aa).

[4Fe-4S] cluster contacts are provided by cysteine 73, cysteine 76, cysteine 77, cysteine 79, cysteine 84, and cysteine 94. Residue histidine 117 participates in CO binding. Histidine 250, cysteine 278, and cysteine 323 together coordinate [Ni-4Fe-4S] cluster. 2 consecutive 4Fe-4S ferredoxin-type domains span residues 406–436 (SDEQ…IPEA) and 445–475 (FSYL…LSVI). Residues cysteine 417, cysteine 420, cysteine 423, cysteine 427, cysteine 455, cysteine 458, cysteine 461, and cysteine 465 each coordinate [4Fe-4S] cluster. Cysteine 523, cysteine 552, and cysteine 587 together coordinate [Ni-4Fe-4S] cluster.

Belongs to the Ni-containing carbon monoxide dehydrogenase family. In terms of assembly, heterotetramer of two alpha and two epsilon subunits. The ACDS complex is made up of alpha, epsilon, beta, gamma and delta subunits with a probable stoichiometry of (alpha(2)epsilon(2))(4)-beta(8)-(gamma(1)delta(1))(8). [4Fe-4S] cluster is required as a cofactor. Requires [Ni-4Fe-4S] cluster as cofactor.

The enzyme catalyses CO + 2 oxidized [2Fe-2S]-[ferredoxin] + H2O = 2 reduced [2Fe-2S]-[ferredoxin] + CO2 + 2 H(+). It functions in the pathway one-carbon metabolism; methanogenesis from acetate. Part of the ACDS complex that catalyzes the reversible cleavage of acetyl-CoA, allowing growth on acetate as sole source of carbon and energy. The alpha-epsilon subcomponent functions as a carbon monoxide dehydrogenase. The sequence is that of Acetyl-CoA decarbonylase/synthase complex subunit alpha 1 from Methanosarcina mazei (strain ATCC BAA-159 / DSM 3647 / Goe1 / Go1 / JCM 11833 / OCM 88) (Methanosarcina frisia).